The chain runs to 168 residues: G/U mismatch-specific DNA glycosylase (168 aa).

It belongs to the uracil-DNA glycosylase (UDG) superfamily. TDG/mug family. In terms of assembly, binds DNA as a monomer.

The protein resides in the cytoplasm. It carries out the reaction Specifically hydrolyzes mismatched double-stranded DNA and polynucleotides, releasing free uracil.. Excises ethenocytosine and uracil, which can arise by alkylation or deamination of cytosine, respectively, from the corresponding mispairs with guanine in ds-DNA. It is capable of hydrolyzing the carbon-nitrogen bond between the sugar-phosphate backbone of the DNA and the mispaired base. The complementary strand guanine functions in substrate recognition. Required for DNA damage lesion repair in stationary-phase cells. This is G/U mismatch-specific DNA glycosylase from Escherichia fergusonii (strain ATCC 35469 / DSM 13698 / CCUG 18766 / IAM 14443 / JCM 21226 / LMG 7866 / NBRC 102419 / NCTC 12128 / CDC 0568-73).